We begin with the raw amino-acid sequence, 425 residues long: Amidase 1 (425 aa).

Alanine 2 is modified (N-acetylalanine). Active-site charge relay system residues include lysine 36 and serine 113. Serine 137 serves as the catalytic Acyl-ester intermediate.

This sequence belongs to the amidase family. In terms of tissue distribution, expressed in cotyledons, leaves and flower buds. Lower levels in roots, stems and siliques.

It localises to the cytoplasm. The protein resides in the nucleus. It is found in the nucleoplasm. The enzyme catalyses a monocarboxylic acid amide + H2O = a monocarboxylate + NH4(+). The catalysed reaction is indole-3-acetamide + H2O = (indol-3-yl)acetate + NH4(+). It catalyses the reaction 2-phenylacetamide + H2O = 2-phenylacetate + NH4(+). It carries out the reaction L-asparagine + H2O = L-aspartate + NH4(+). The enzyme catalyses 1-naphthaleneacetamide + H2O = 1-naphthaleneacetate + NH4(+). With respect to regulation, inhibited by phenylmethylsulfonyl fluoride (PMSF). Its function is as follows. Amidase involved in auxin biosynthesis. Converts indole-3-acetamide to indole-3-acetate. Converts phenyl-2-acetamide (PAM) to phenyl-2-acetate. Substrate preference is PAM &gt; IAM. Can also use L-asparagine and 1-naphtalene-acetamide as substrates, but not indole-3-acetonitrile or indole-3-acetyl-L-aspartic acid. The sequence is that of Amidase 1 from Arabidopsis thaliana (Mouse-ear cress).